A 709-amino-acid polypeptide reads, in one-letter code: Mucin-20 (709 aa).

A signal peptide spans 1 to 25; that stretch reads MGCLWGLALPLFFFCWEVGVSGSSA. A compositionally biased stretch (polar residues) spans 57–69; the sequence is TQTLSAETSSRAS. Disordered stretches follow at residues 57 to 92 and 170 to 403; these read TQTLSAETSSRASTPAGPIPEAETRGAKRISPARET and KGLS…WSPG. The segment covering 78-92 has biased composition (basic and acidic residues); that stretch reads AETRGAKRISPARET. Composition is skewed to low complexity over residues 173-182, 190-199, 209-218, 228-237, 247-256, 266-275, 285-294, 304-313, 323-332, 342-351, 361-370, and 380-389; these read SSESSASSDS and SRASESSASS. Repeat copies occupy residues 173–192, 193–211, 212–230, 231–249, 250–268, 269–287, 288–306, 307–325, 326–344, 345–363, and 364–382. Residues 173–400 form a 12 X 20 AA approximate tandem repeats of S-S-E-S-S-A-S-S-D-S-P-H-P-V-I-T-P-S-R-A region; that stretch reads SSESSASSDS…GPHPVITPSW (228 aa). The stretch at 383-400 is one 12; approximate repeat; that stretch reads SESSASSDGPHPVITPSW. A glycan (N-linked (GlcNAc...) asparagine) is linked at asparagine 423. Disordered regions lie at residues 434–515 and 583–657; these read SSIP…APGA and NFTP…VSAG. Residues 450–656 form an involved in oligomerization region; the sequence is VKASSTSDPP…RTRPTTDVSA (207 aa). Polar residues predominate over residues 474–489; sequence VTASAETLSTAGTTES. Low complexity predominate over residues 613–652; it reads TTTNSSRGTNSTLAKITTSAKTTMKPPTATPTTARTRPTT. N-linked (GlcNAc...) asparagine glycosylation is found at asparagine 616 and asparagine 622. Residues 657–709 are interaction with MET; sequence GENGGFLLLRLSVASPEDLTDPRVAERLMQQLHRELHAHAPHFQVSLLRVRRG.

In terms of assembly, interacts with MET; oligomerization increases affinity for MET. As to expression, highly expressed in kidney, moderately in placenta, lung, prostate, liver, and digestive system. In the kidney, localized in the proximal tubules but not in the glomerulus or distal tubules. Detected in most of the male urogenital tract epithelia, with the exception of epididymis.

It is found in the secreted. Its subcellular location is the apical cell membrane. It localises to the basolateral cell membrane. The protein localises to the cell projection. The protein resides in the microvillus membrane. Its function is as follows. May regulate MET signaling cascade. Seems to decrease hepatocyte growth factor (HGF)-induced transient MAPK activation. Blocks GRB2 recruitment to MET thus suppressing the GRB2-RAS pathway. Inhibits HGF-induced proliferation of MMP1 and MMP9 expression. This is Mucin-20 (MUC20) from Homo sapiens (Human).